The primary structure comprises 530 residues: Na(+)/H(+) antiporter NhaB (530 aa).

Transmembrane regions (helical) follow at residues 13–33, 34–54, 90–110, 121–141, 145–165, 205–225, 241–261, 306–326, 351–371, 393–413, 455–475, and 481–501; these read FLGK…VINP, LVFF…EFIF, LVAN…IYFM, ILIG…TAAF, FLDA…FYAI, LLMH…VGEP, FIIR…LTCI, GLIA…VGLI, EEAL…AVII, LALF…VFVG, GQAA…QLSY, and MALP…IFFL.

This sequence belongs to the NhaB Na(+)/H(+) (TC 2.A.34) antiporter family.

Its subcellular location is the cell inner membrane. The enzyme catalyses 2 Na(+)(in) + 3 H(+)(out) = 2 Na(+)(out) + 3 H(+)(in). Its function is as follows. Na(+)/H(+) antiporter that extrudes sodium in exchange for external protons. The chain is Na(+)/H(+) antiporter NhaB from Aliivibrio fischeri (strain ATCC 700601 / ES114) (Vibrio fischeri).